The primary structure comprises 443 residues: Protein king tubby (443 aa).

Disordered regions lie at residues 57-80 (TNGS…NNMR) and 98-191 (HELE…EGDV). Positions 68-80 (AMNTSRNHSNNMR) are enriched in polar residues. Residues 113–128 (QHQQSASHSANSTQSQ) show a composition bias toward low complexity. Ser136 is modified (phosphoserine). The segment covering 177-186 (NGTGNGTGGE) has biased composition (gly residues).

It belongs to the TUB family.

The protein localises to the cytoplasm. It is found in the nucleus. It localises to the cell projection. Its subcellular location is the cilium membrane. The protein resides in the rhabdomere. This is Protein king tubby from Drosophila simulans (Fruit fly).